A 243-amino-acid polypeptide reads, in one-letter code: 3-deoxy-manno-octulosonate cytidylyltransferase (243 aa).

This sequence belongs to the KdsB family.

It localises to the cytoplasm. The enzyme catalyses 3-deoxy-alpha-D-manno-oct-2-ulosonate + CTP = CMP-3-deoxy-beta-D-manno-octulosonate + diphosphate. It participates in nucleotide-sugar biosynthesis; CMP-3-deoxy-D-manno-octulosonate biosynthesis; CMP-3-deoxy-D-manno-octulosonate from 3-deoxy-D-manno-octulosonate and CTP: step 1/1. Its pathway is bacterial outer membrane biogenesis; lipopolysaccharide biosynthesis. In terms of biological role, activates KDO (a required 8-carbon sugar) for incorporation into bacterial lipopolysaccharide in Gram-negative bacteria. The protein is 3-deoxy-manno-octulosonate cytidylyltransferase of Helicobacter pylori (strain P12).